Here is a 260-residue protein sequence, read N- to C-terminus: Centromere protein K (260 aa).

A coiled-coil region spans residues 84-173; the sequence is EEELQKVKKE…KKLMNALGEF (90 aa).

It belongs to the CENP-K/MCM22 family. In terms of assembly, component of the CENPA-HI complex, at least composed of CENPH, CENPI, CENPK, CENPL, CENPM, CENPO and CENPP.

The protein resides in the nucleus. Its subcellular location is the chromosome. It localises to the centromere. The protein localises to the kinetochore. In terms of biological role, component of the CENPA-HI complex, a centromeric complex involved in assembly of kinetochore proteins, mitotic progression and chromosome segregation. This Gallus gallus (Chicken) protein is Centromere protein K (CENPK).